A 275-amino-acid polypeptide reads, in one-letter code: Structure-specific endonuclease subunit SLX1 (275 aa).

In terms of domain architecture, GIY-YIG spans 12-95 (RFFGVYLLYC…QHPHASRRLA (84 aa)). Residues 148 to 161 (HVPLAFGPPPPQAP) show a composition bias toward pro residues. The segment at 148–179 (HVPLAFGPPPPQAPAPRRRAGPFDDAEPEPDQ) is disordered. The SLX1-type zinc finger occupies 186-238 (CSLCAQTIQDEEGPLCCPHPGCLLRAHVICLAEEFLQEEPGQLLPLEGQCPCC).

It belongs to the SLX1 family. Forms a heterodimer with SLX4. A divalent metal cation is required as a cofactor.

Its subcellular location is the nucleus. Catalytic subunit of the SLX1-SLX4 structure-specific endonuclease that resolves DNA secondary structures generated during DNA repair and recombination. Has endonuclease activity towards branched DNA substrates, introducing single-strand cuts in duplex DNA close to junctions with ss-DNA. Has a preference for 5'-flap structures, and promotes symmetrical cleavage of static and migrating Holliday junctions (HJs). Resolves HJs by generating two pairs of ligatable, nicked duplex products. This Homo sapiens (Human) protein is Structure-specific endonuclease subunit SLX1.